Here is a 308-residue protein sequence, read N- to C-terminus: tRNA pseudouridine synthase B (308 aa).

Asp-47 acts as the Nucleophile in catalysis.

It belongs to the pseudouridine synthase TruB family. Type 1 subfamily.

It catalyses the reaction uridine(55) in tRNA = pseudouridine(55) in tRNA. In terms of biological role, responsible for synthesis of pseudouridine from uracil-55 in the psi GC loop of transfer RNAs. The chain is tRNA pseudouridine synthase B from Rhodospirillum rubrum (strain ATCC 11170 / ATH 1.1.1 / DSM 467 / LMG 4362 / NCIMB 8255 / S1).